We begin with the raw amino-acid sequence, 60 residues long: Large ribosomal subunit protein uL30 (60 aa).

It belongs to the universal ribosomal protein uL30 family. As to quaternary structure, part of the 50S ribosomal subunit.

The polypeptide is Large ribosomal subunit protein uL30 (Desulforapulum autotrophicum (strain ATCC 43914 / DSM 3382 / VKM B-1955 / HRM2) (Desulfobacterium autotrophicum)).